The primary structure comprises 262 residues: 2-keto-4-pentenoate hydratase (262 aa).

Belongs to the hydratase/decarboxylase family. MhpD subfamily. The cofactor is a divalent metal cation.

It catalyses the reaction (S)-4-hydroxy-2-oxopentanoate = (2Z)-2-hydroxypenta-2,4-dienoate + H2O. It functions in the pathway aromatic compound metabolism; 3-phenylpropanoate degradation. Functionally, catalyzes the conversion of 2-hydroxypentadienoic acid (enolic form of 2-oxopent-4-enoate) to 4-hydroxy-2-ketopentanoic acid. In Paraburkholderia phymatum (strain DSM 17167 / CIP 108236 / LMG 21445 / STM815) (Burkholderia phymatum), this protein is 2-keto-4-pentenoate hydratase.